A 208-amino-acid chain; its full sequence is Holliday junction resolvase RecU (208 aa).

Mg(2+)-binding residues include threonine 87, aspartate 89, glutamate 102, and glutamine 121.

Belongs to the RecU family. Requires Mg(2+) as cofactor.

The protein localises to the cytoplasm. The enzyme catalyses Endonucleolytic cleavage at a junction such as a reciprocal single-stranded crossover between two homologous DNA duplexes (Holliday junction).. Endonuclease that resolves Holliday junction intermediates in genetic recombination. Cleaves mobile four-strand junctions by introducing symmetrical nicks in paired strands. Promotes annealing of linear ssDNA with homologous dsDNA. Required for DNA repair, homologous recombination and chromosome segregation. The chain is Holliday junction resolvase RecU from Staphylococcus aureus (strain MRSA252).